Consider the following 520-residue polypeptide: tRNA-2-methylthio-N(6)-dimethylallyladenosine synthase (520 aa).

Residues Lys77–Phe195 enclose the MTTase N-terminal domain. The [4Fe-4S] cluster site is built by Cys86, Cys122, Cys156, Cys232, Cys236, and Cys239. Residues Arg218–Arg448 form the Radical SAM core domain. The TRAM domain occupies Leu450 to Ser513.

The protein belongs to the methylthiotransferase family. MiaB subfamily. Monomer. The cofactor is [4Fe-4S] cluster.

It localises to the cytoplasm. The enzyme catalyses N(6)-dimethylallyladenosine(37) in tRNA + (sulfur carrier)-SH + AH2 + 2 S-adenosyl-L-methionine = 2-methylsulfanyl-N(6)-dimethylallyladenosine(37) in tRNA + (sulfur carrier)-H + 5'-deoxyadenosine + L-methionine + A + S-adenosyl-L-homocysteine + 2 H(+). Functionally, catalyzes the methylthiolation of N6-(dimethylallyl)adenosine (i(6)A), leading to the formation of 2-methylthio-N6-(dimethylallyl)adenosine (ms(2)i(6)A) at position 37 in tRNAs that read codons beginning with uridine. This is tRNA-2-methylthio-N(6)-dimethylallyladenosine synthase from Shouchella clausii (strain KSM-K16) (Alkalihalobacillus clausii).